Reading from the N-terminus, the 150-residue chain is Small ribosomal subunit protein uS19y (150 aa).

It belongs to the universal ribosomal protein uS19 family.

It localises to the cytoplasm. The protein is Small ribosomal subunit protein uS19y (RPS15C) of Arabidopsis thaliana (Mouse-ear cress).